The sequence spans 557 residues: CTP synthase (557 aa).

The tract at residues 1–270 (MTKYVFVTGG…DAIICEELKL (270 aa)) is amidoligase domain. Ser-13 serves as a coordination point for CTP. Ser-13 lines the UTP pocket. ATP-binding positions include 14-19 (SLGKGI) and Asp-71. Mg(2+)-binding residues include Asp-71 and Glu-144. CTP is bound by residues 151–153 (DIE), 191–196 (KTKPTQ), and Lys-227. UTP-binding positions include 191 to 196 (KTKPTQ) and Lys-227. One can recognise a Glutamine amidotransferase type-1 domain in the interval 295-547 (TIGMVGKYVD…VEAALAHHEA (253 aa)). Gly-356 provides a ligand contact to L-glutamine. The active-site Nucleophile; for glutamine hydrolysis is Cys-383. L-glutamine-binding positions include 384 to 387 (LGMQ), Glu-407, and Arg-473. Active-site residues include His-520 and Glu-522.

Belongs to the CTP synthase family. Homotetramer.

It carries out the reaction UTP + L-glutamine + ATP + H2O = CTP + L-glutamate + ADP + phosphate + 2 H(+). The enzyme catalyses L-glutamine + H2O = L-glutamate + NH4(+). The catalysed reaction is UTP + NH4(+) + ATP = CTP + ADP + phosphate + 2 H(+). It functions in the pathway pyrimidine metabolism; CTP biosynthesis via de novo pathway; CTP from UDP: step 2/2. With respect to regulation, allosterically activated by GTP, when glutamine is the substrate; GTP has no effect on the reaction when ammonia is the substrate. The allosteric effector GTP functions by stabilizing the protein conformation that binds the tetrahedral intermediate(s) formed during glutamine hydrolysis. Inhibited by the product CTP, via allosteric rather than competitive inhibition. Functionally, catalyzes the ATP-dependent amination of UTP to CTP with either L-glutamine or ammonia as the source of nitrogen. Regulates intracellular CTP levels through interactions with the four ribonucleotide triphosphates. The polypeptide is CTP synthase (Paraburkholderia phytofirmans (strain DSM 17436 / LMG 22146 / PsJN) (Burkholderia phytofirmans)).